The following is a 946-amino-acid chain: Translation initiation factor IF-2 (946 aa).

Disordered regions lie at residues Ala-58 to Ile-250 and Val-301 to Ser-324. 2 stretches are compositionally biased toward low complexity: residues Glu-102 to Ala-165 and Ala-174 to Gln-185. The segment covering Pro-186–Arg-211 has biased composition (pro residues). A compositionally biased stretch (low complexity) spans Pro-212–Gln-229. Residues Ile-445–Lys-614 enclose the tr-type G domain. The G1 stretch occupies residues Gly-454 to Thr-461. GTP is bound at residue Gly-454–Thr-461. The tract at residues Gly-479 to His-483 is G2. The interval Asp-500–Gly-503 is G3. Residues Asp-500–His-504 and Asn-554–Asp-557 contribute to the GTP site. Positions Asn-554–Asp-557 are G4. Residues Ser-590 to Arg-592 form a G5 region.

It belongs to the TRAFAC class translation factor GTPase superfamily. Classic translation factor GTPase family. IF-2 subfamily.

The protein localises to the cytoplasm. Its function is as follows. One of the essential components for the initiation of protein synthesis. Protects formylmethionyl-tRNA from spontaneous hydrolysis and promotes its binding to the 30S ribosomal subunits. Also involved in the hydrolysis of GTP during the formation of the 70S ribosomal complex. This is Translation initiation factor IF-2 from Anaeromyxobacter sp. (strain K).